A 243-amino-acid chain; its full sequence is MELSYFHVAKDVPSGIKPETSVVIDVLRATTTIACALNNGAEAVQTFADLDNLKEQASCWPLSKRLLLGERGGKKIDGFDLGNSPLAVTSNVVKGKRLFMSTTNGTRSLERVKESKSLYTMSFINRKAVAEKLISNQSKSVLILGSGWEGAYSLEDSLAAGALASFLLNKNPNSVHILNDELSAAVALWSCWENNIEGCLRNATHGKRLERLGNHDDDFTCCSELDKICVVPTQREKGVLCSL.

Belongs to the ComB family. It depends on Mg(2+) as a cofactor.

It catalyses the reaction (2R)-O-phospho-3-sulfolactate + H2O = (2R)-3-sulfolactate + phosphate. This Prochlorococcus marinus (strain SARG / CCMP1375 / SS120) protein is Probable 2-phosphosulfolactate phosphatase.